Consider the following 250-residue polypeptide: Histone H1.1 (250 aa).

Positions 1-11 (MSDSAVATSAS) are enriched in polar residues. Disordered regions lie at residues 1 to 52 (MSDS…QQMV) and 104 to 250 (QTKG…ATKK). One can recognise an H15 domain in the interval 44 to 118 (SHPPTQQMVD…GASGSFKLSA (75 aa)). A compositionally biased stretch (basic and acidic residues) spans 122-133 (KDAKPKASAVEK). A compositionally biased stretch (low complexity) spans 140-161 (ASAARATKSKSSTSTTKKAAGA). A compositionally biased stretch (basic and acidic residues) spans 174–191 (KNVEKKKADKEKAKDAKK). Over residues 192 to 234 (TGTIKAKPTTAKAKSSATKPKTPKPKTTSAKPKKVVSATTPKK) the composition is skewed to low complexity. Basic residues predominate over residues 235–250 (TAVKKPKAKTASATKK).

This sequence belongs to the histone H1/H5 family.

It is found in the nucleus. Its subcellular location is the chromosome. In terms of biological role, histones H1 are necessary for the condensation of nucleosome chains into higher-order structures. In Drosophila virilis (Fruit fly), this protein is Histone H1.1 (His1.1).